The chain runs to 518 residues: 2-isopropylmalate synthase (518 aa).

A Pyruvate carboxyltransferase domain is found at 5-267 (VIIFDTTLRD…STNIKHKEIY (263 aa)). Residues Asp-14, His-202, His-204, and Asn-238 each contribute to the Mn(2+) site. Residues 392-518 (SLSFFSVQSI…KLKTLKKVNN (127 aa)) form a regulatory domain region.

Belongs to the alpha-IPM synthase/homocitrate synthase family. LeuA type 1 subfamily. As to quaternary structure, homodimer. Mn(2+) serves as cofactor.

It localises to the cytoplasm. The enzyme catalyses 3-methyl-2-oxobutanoate + acetyl-CoA + H2O = (2S)-2-isopropylmalate + CoA + H(+). It participates in amino-acid biosynthesis; L-leucine biosynthesis; L-leucine from 3-methyl-2-oxobutanoate: step 1/4. In terms of biological role, catalyzes the condensation of the acetyl group of acetyl-CoA with 3-methyl-2-oxobutanoate (2-ketoisovalerate) to form 3-carboxy-3-hydroxy-4-methylpentanoate (2-isopropylmalate). In Buchnera aphidicola subsp. Schizaphis graminum (strain Sg), this protein is 2-isopropylmalate synthase.